Here is a 509-residue protein sequence, read N- to C-terminus: Photosystem II CP47 reaction center protein (509 aa).

A run of 6 helical transmembrane segments spans residues 21-36 (AVHMMHTALVAGWAGS), 101-115 (IVFSGLCFLAAIWHW), 140-156 (GIHLFLSGVACFGFGAF), 203-218 (IAAGTLGILAGLFHLS), 237-253 (VLSSSSIAAVFFAAFVV), and 458-473 (SFALLFFFGHIWHGSR).

The protein belongs to the PsbB/PsbC family. PsbB subfamily. PSII is composed of 1 copy each of membrane proteins PsbA, PsbB, PsbC, PsbD, PsbE, PsbF, PsbH, PsbI, PsbJ, PsbK, PsbL, PsbM, PsbT, PsbX, PsbY, PsbZ, Psb30/Ycf12, at least 3 peripheral proteins of the oxygen-evolving complex and a large number of cofactors. It forms dimeric complexes. Binds multiple chlorophylls. PSII binds additional chlorophylls, carotenoids and specific lipids. serves as cofactor.

The protein localises to the plastid. It is found in the chloroplast thylakoid membrane. In terms of biological role, one of the components of the core complex of photosystem II (PSII). It binds chlorophyll and helps catalyze the primary light-induced photochemical processes of PSII. PSII is a light-driven water:plastoquinone oxidoreductase, using light energy to abstract electrons from H(2)O, generating O(2) and a proton gradient subsequently used for ATP formation. In Populus deltoides (Eastern poplar), this protein is Photosystem II CP47 reaction center protein.